Here is a 460-residue protein sequence, read N- to C-terminus: Chromosomal replication initiator protein DnaA (460 aa).

Residues 1–91 (MSLINPKVSA…LLWQNEDKSI (91 aa)) are domain I, interacts with DnaA modulators. The interval 91 to 122 (ICSIDIQVTEEKNSSSSIISKNKEESVNNLGS) is domain II. A domain III, AAA+ region region spans residues 123–342 (PLDPRFTFDN…GALNKVAHTS (220 aa)). The ATP site is built by Gly169, Gly171, Lys172, and Thr173. Residues 343–460 (LIGRSMTVES…EINQLRKMFK (118 aa)) form a domain IV, binds dsDNA region.

It belongs to the DnaA family. As to quaternary structure, oligomerizes as a right-handed, spiral filament on DNA at oriC.

It is found in the cytoplasm. Its function is as follows. Plays an essential role in the initiation and regulation of chromosomal replication. ATP-DnaA binds to the origin of replication (oriC) to initiate formation of the DNA replication initiation complex once per cell cycle. Binds the DnaA box (a 9 base pair repeat at the origin) and separates the double-stranded (ds)DNA. Forms a right-handed helical filament on oriC DNA; dsDNA binds to the exterior of the filament while single-stranded (ss)DNA is stabiized in the filament's interior. The ATP-DnaA-oriC complex binds and stabilizes one strand of the AT-rich DNA unwinding element (DUE), permitting loading of DNA polymerase. After initiation quickly degrades to an ADP-DnaA complex that is not apt for DNA replication. Binds acidic phospholipids. The sequence is that of Chromosomal replication initiator protein DnaA from Wolbachia sp. subsp. Brugia malayi (strain TRS).